The sequence spans 978 residues: Retinoblastoma-related protein 2 (978 aa).

Residues 385–585 form a domain A region; the sequence is TPVTSAMTTA…EKGSSLYNSL (201 aa). The pocket stretch occupies residues 385 to 832; it reads TPVTSAMTTA…NQVFVPTVKP (448 aa). Positions 586–704 are spacer; sequence VVARPSLSTE…PVSGNEKCAV (119 aa). The segment at 616–645 is disordered; that stretch reads QSIHPDGLPPTPSKRWPSAGPDGNCYPQSP. Residues 705-832 are domain B; that stretch reads VGVQIFFSKI…NQVFVPTVKP (128 aa). 2 disordered regions span residues 841–878 and 947–978; these read STRP…SSSH and VAGS…KTDS. A compositionally biased stretch (polar residues) spans 850–864; it reads TNSQIPGSPKSSPFS. Over residues 958 to 971 the composition is skewed to low complexity; the sequence is SASSDPAAAFSPLS.

The protein belongs to the retinoblastoma protein (RB) family.

It localises to the nucleus. In terms of biological role, regulator of biological processes that recruits a histone deacetylase to control gene transcription. May play a role in the entry into mitosis, negatively regulating the cell proliferation. Formation of stable complexes with geminiviridae replication-associated proteins may create a cellular environment which favors viral DNA replication. The sequence is that of Retinoblastoma-related protein 2 (RBR2) from Oryza sativa subsp. japonica (Rice).